We begin with the raw amino-acid sequence, 243 residues long: Asnovolin H synthase nvfL (243 aa).

7 helical membrane-spanning segments follow: residues A20–S42, A51–P71, F75–I95, L112–A132, I138–L160, S169–I189, and L205–Y225.

It belongs to the paxB family.

The protein localises to the membrane. It catalyses the reaction (3R)-[(10S)-11-epoxyfarnesyl]-2,3,5-trimethyl-6-oxido-4-oxocyclohexa-1,5-diene-1-carboxylate + H(+) = asnovolin H. The protein operates within secondary metabolite biosynthesis; terpenoid biosynthesis. Terpene cyclase; part of the gene cluster that mediates the biosynthesis of novofumigatonin, a heavily oxygenated meroterpenoid containing a unique orthoester moiety. The first step of the pathway is the synthesis of 3,5-dimethylorsellinic acid (DMOA) by the polyketide synthase nvfA via condensation of one acetyl-CoA starter unit with 3 malonyl-CoA units and 2 methylations. DMOA is then converted to farnesyl-DMOA by the farnesyltransferase nvfB. Epoxydation by FAD-dependent monooxygenase nvfK, followed by a protonation-initiated cyclization catalyzed by the terpene cyclase nvfL leads to the production of asnavolin H. The short chain dehydrogenase nvfC then as a 3-OH dehydrogenase of asnovolin H to yield chemesin D. There are two branches to synthesize asnovolin A from chemesin D. In one branch, chemesin D undergoes Baeyer-Villiger oxidation by nvfH, methylation by nvfJ, and enoyl reduction by the nvfM D enoylreductase that reduces the double bond between C-5'and C-6', to form respectively asnovolin I, asnovolin K, and asnovolin A. In the other branch, the methylation precedes the Baeyer-Villiger oxidation and the enoyl reduction to yield asnovolin A via the asnovolin J intermediate. Asnovolin A is further converted to fumigatonoid A by the Fe(II)/2-oxoglutarate-dependent dioxygenase nvfI that catalyzes an endoperoxidation reaction. The alpha/beta hydrolase nvfD then acts as an epimerase that converts fumigatonoid A to its C-5' epimer, which then undergoes spontaneous or nvfD-catalyzed lactonization. The following step utilizes the ketoreductase nvfG to produce fumigatonoid B. The dioxygenase nvfE further converts fumigatonoid B into fumigatonoid C. Finally the Fe(II)/2-oxoglutarate-dependent dioxygenase nvfF catalyzes two rounds of oxidation to transform fumigatonoid C into the end product, novofumigatonin A. This is Asnovolin H synthase nvfL from Aspergillus novofumigatus (strain IBT 16806).